The sequence spans 42 residues: Crotamine-IV-3 (42 aa).

3 disulfides stabilise this stretch: cysteine 4–cysteine 37, cysteine 11–cysteine 31, and cysteine 19–cysteine 38.

The protein belongs to the crotamine-myotoxin family. Monomer. Expressed by the venom gland.

The protein localises to the secreted. Cationic peptide that possesses multiple functions. It acts as a cell-penetrating peptide (CPP), and as a potent voltage-gated potassium channel (Kv) inhibitor. It exhibits antimicrobial activities, and hind limb paralysis. It also induces potent blockade of neuromuscular transmission in young chicken biventer cervicis preparation and potent myotoxic effect. In mice, it induces myonecrosis, upon intramuscular or subcutaneous injections. This is Crotamine-IV-3 from Crotalus durissus cumanensis (South American rattlesnake).